The primary structure comprises 622 residues: Chaperone protein HscA homolog (622 aa).

Belongs to the heat shock protein 70 family.

Its function is as follows. Chaperone involved in the maturation of iron-sulfur cluster-containing proteins. Has a low intrinsic ATPase activity which is markedly stimulated by HscB. In Methylobacillus flagellatus (strain ATCC 51484 / DSM 6875 / VKM B-1610 / KT), this protein is Chaperone protein HscA homolog.